Consider the following 175-residue polypeptide: Universal stress protein A-like protein (175 aa).

AMP contacts are provided by Ala11, Val12, Asn13, Ser26, Cys27, Val53, Gly131, Arg133, Thr145, Val146, and Ser147.

The protein belongs to the universal stress protein A family. In terms of assembly, homohexamer.

This is Universal stress protein A-like protein from Arabidopsis thaliana (Mouse-ear cress).